Reading from the N-terminus, the 622-residue chain is Cilia- and flagella-associated protein 206 (622 aa).

Residues 571-592 (QVYPPKDTSTQSMREDSTGVPR) form a disordered region.

The protein belongs to the CFAP206 family.

It localises to the cytoplasm. It is found in the cytoskeleton. The protein localises to the cilium axoneme. The protein resides in the cilium basal body. Essential for sperm motility and is involved in the regulation of the beating frequency of motile cilia on the epithelial cells of the respiratory tract. Required for the establishment of radial spokes in sperm flagella. This chain is Cilia- and flagella-associated protein 206, found in Macaca fascicularis (Crab-eating macaque).